The primary structure comprises 205 residues: Putative 3-methyladenine DNA glycosylase (205 aa).

Belongs to the DNA glycosylase MPG family.

This chain is Putative 3-methyladenine DNA glycosylase, found in Bacillus cereus (strain AH187).